The sequence spans 664 residues: Gametogenetin-binding protein 2 (664 aa).

2 disordered regions span residues 375-425 (QEKK…NTSE) and 447-476 (KKGL…QEGS). Over residues 376–388 (EKKRQKKNRRKNK) the composition is skewed to basic residues. Residues 452-475 (PHSNVSDCGYSSSLEGSEPGSQEG) are compositionally biased toward polar residues.

Its subcellular location is the cytoplasm. May be involved in spermatogenesis. The protein is Gametogenetin-binding protein 2 (ggnbp2) of Xenopus laevis (African clawed frog).